The following is a 221-amino-acid chain: Redox-sensing transcriptional repressor Rex (221 aa).

Residues I17–F56 constitute a DNA-binding region (H-T-H motif). An NAD(+)-binding site is contributed by G91–G96.

This sequence belongs to the transcriptional regulatory Rex family. Homodimer.

It localises to the cytoplasm. Its function is as follows. Modulates transcription in response to changes in cellular NADH/NAD(+) redox state. The protein is Redox-sensing transcriptional repressor Rex of Oenococcus oeni (strain ATCC BAA-331 / PSU-1).